A 154-amino-acid chain; its full sequence is Large ribosomal subunit protein uL13 (154 aa).

A disordered region spans residues 129-154; that stretch reads SQHPHEAQQPEALDVGTLNRKNKRIA.

It belongs to the universal ribosomal protein uL13 family. As to quaternary structure, part of the 50S ribosomal subunit.

In terms of biological role, this protein is one of the early assembly proteins of the 50S ribosomal subunit, although it is not seen to bind rRNA by itself. It is important during the early stages of 50S assembly. The chain is Large ribosomal subunit protein uL13 from Bartonella bacilliformis (strain ATCC 35685 / KC583 / Herrer 020/F12,63).